Reading from the N-terminus, the 446-residue chain is ATP-dependent RNA helicase SUB2 (446 aa).

Serine 2 carries the N-acetylserine modification. 2 positions are modified to phosphoserine: serine 13 and serine 37. Residues 23–41 show a composition bias toward low complexity; the sequence is ASKAAEAGETGAATSATEG. Residues 23 to 52 are disordered; sequence ASKAAEAGETGAATSATEGDNNNNTAAGDK. The Q motif motif lies at 62–90; the sequence is TGFKDFLLKPELSRAIIDCGFEHPSEVQQ. The Helicase ATP-binding domain maps to 93-268; the sequence is IPQSIHGTDV…RRFLQNPLEI (176 aa). 106 to 113 serves as a coordination point for ATP; that stretch reads AKSGLGKT. Threonine 169 carries the phosphothreonine modification. Residues 215–218 carry the DECD box motif; the sequence is DECD. The Helicase C-terminal domain occupies 280-441; sequence GLQQYYIKLE…EFPEEGIDPS (162 aa).

Belongs to the DEAD box helicase family. DECD subfamily. Component of the TREX complex composed of at least SUB2, TEX1, YRA1 and the four THO complex components: HPR1, MFT1, THO2 and THP1. Interacts with HPR1, YRA1, and YRA2. SUB2 may mediate the interaction between the THO complex and YRA1. Associates with growing mRNP complexes during transcription. This association requires the presence of HPR1. Also interacts with SAC3. Interacts with THO1 in the presence of RNA; this interaction facilitates RNA binding of SUB2.

It is found in the nucleus. It carries out the reaction ATP + H2O = ADP + phosphate + H(+). Its function is as follows. ATP-binding RNA helicase component of the TREX complex involved in transcription elongation and required for the export of mRNA out of the nucleus. SUB2 also plays a role in pre-mRNA splicing and spliceosome assembly. May be involved in rDNA and telomeric silencing, and maintenance of genome integrity. Associates with THO1, which facilitates RNA binding of SUB2 and likely plays a role in mRNA export. This Saccharomyces cerevisiae (strain ATCC 204508 / S288c) (Baker's yeast) protein is ATP-dependent RNA helicase SUB2 (SUB2).